Consider the following 478-residue polypeptide: ATP-dependent RNA helicase DDX19A (478 aa).

An N-acetylalanine modification is found at Ala2. Residues Ala2–Glu299 are N-terminal lobe. Lys26 participates in a covalent cross-link: Glycyl lysine isopeptide (Lys-Gly) (interchain with G-Cter in SUMO1); alternate. Lys26 participates in a covalent cross-link: Glycyl lysine isopeptide (Lys-Gly) (interchain with G-Cter in SUMO2); alternate. Phosphothreonine is present on Thr42. Residues Asp54–Ser67 form an N-terminal helix region. The Q motif motif lies at Lys91–Glu119. ATP contacts are provided by residues Gln118 and Ser137–Thr144. In terms of domain architecture, Helicase ATP-binding spans Met124–Ile294. The short motif at Asp241 to Asp244 is the DEAD box element. The interval Glu300 to Asn478 is C-terminal lobe. One can recognise a Helicase C-terminal domain in the interval Thr305 to Ile473. ATP is bound by residues Arg428 and Arg431.

This sequence belongs to the DEAD box helicase family. DDX19/DBP5 subfamily.

It localises to the cytoplasm. Its subcellular location is the nucleus. The protein resides in the nucleoplasm. The catalysed reaction is ATP + H2O = ADP + phosphate + H(+). Functionally, ATP-dependent RNA helicase involved in mRNA export from the nucleus. Rather than unwinding RNA duplexes, DDX19 functions as a remodeler of ribonucleoprotein particles, whereby proteins bound to nuclear mRNA are dissociated and replaced by cytoplasmic mRNA binding proteins. The chain is ATP-dependent RNA helicase DDX19A (DDX19A) from Homo sapiens (Human).